A 319-amino-acid chain; its full sequence is Ankyrin repeat domain-containing protein 1 (319 aa).

Residues Lys-46 to Leu-65 form a disordered region. Residues Val-53–Ile-89 are a coiled coil. Positions Gln-55 to Leu-65 are enriched in basic and acidic residues. ANK repeat units follow at residues Tyr-152 to Phe-181, Leu-185 to Ala-214, Leu-218 to Ala-247, Glu-251 to Val-280, and Ala-284 to Arg-315.

In terms of assembly, interacts with TTN/titin and YBX1. Expressed in heart, cardiac muscle.

It is found in the nucleus. Its function is as follows. May play an important role in endothelial cell activation. May act as a nuclear transcription factor that negatively regulates the expression of cardiac genes. The polypeptide is Ankyrin repeat domain-containing protein 1 (Ankrd1) (Mus musculus (Mouse)).